Here is a 260-residue protein sequence, read N- to C-terminus: Thiazole synthase (260 aa).

Lys96 acts as the Schiff-base intermediate with DXP in catalysis. Residues Gly157, 184-185 (AG), and 206-207 (NT) each bind 1-deoxy-D-xylulose 5-phosphate.

It belongs to the ThiG family. In terms of assembly, homotetramer. Forms heterodimers with either ThiH or ThiS.

It is found in the cytoplasm. It carries out the reaction [ThiS sulfur-carrier protein]-C-terminal-Gly-aminoethanethioate + 2-iminoacetate + 1-deoxy-D-xylulose 5-phosphate = [ThiS sulfur-carrier protein]-C-terminal Gly-Gly + 2-[(2R,5Z)-2-carboxy-4-methylthiazol-5(2H)-ylidene]ethyl phosphate + 2 H2O + H(+). It participates in cofactor biosynthesis; thiamine diphosphate biosynthesis. Its function is as follows. Catalyzes the rearrangement of 1-deoxy-D-xylulose 5-phosphate (DXP) to produce the thiazole phosphate moiety of thiamine. Sulfur is provided by the thiocarboxylate moiety of the carrier protein ThiS. In vitro, sulfur can be provided by H(2)S. The protein is Thiazole synthase of Rhodopseudomonas palustris (strain HaA2).